Consider the following 686-residue polypeptide: Asparagine-rich protein (686 aa).

The first 18 residues, Met-1–Ser-18, serve as a signal peptide directing secretion. Disordered stretches follow at residues Lys-34–Ala-73, Ser-125–Ile-148, and Ile-201–Asn-236. Over residues Asn-37–Ala-49 the composition is skewed to polar residues. Over residues Glu-62–Ala-73 the composition is skewed to basic and acidic residues.

As to expression, prismatic layer of shell (at protein level). Expressed primarily in the mantle with highest level in the mantle edge and lower level in the mantle pallium.

It localises to the secreted. The sequence is that of Asparagine-rich protein from Margaritifera margaritifera (Freshwater pearl mussel).